A 113-amino-acid polypeptide reads, in one-letter code: Large ribosomal subunit protein uL24 (113 aa).

It belongs to the universal ribosomal protein uL24 family. In terms of assembly, part of the 50S ribosomal subunit.

In terms of biological role, one of two assembly initiator proteins, it binds directly to the 5'-end of the 23S rRNA, where it nucleates assembly of the 50S subunit. Its function is as follows. One of the proteins that surrounds the polypeptide exit tunnel on the outside of the subunit. This chain is Large ribosomal subunit protein uL24 (rplX), found in Fusobacterium nucleatum subsp. nucleatum (strain ATCC 25586 / DSM 15643 / BCRC 10681 / CIP 101130 / JCM 8532 / KCTC 2640 / LMG 13131 / VPI 4355).